Reading from the N-terminus, the 449-residue chain is Glucose-6-phosphate isomerase (449 aa).

Catalysis depends on glutamate 291, which acts as the Proton donor. Active-site residues include histidine 312 and lysine 426.

This sequence belongs to the GPI family.

The protein resides in the cytoplasm. It carries out the reaction alpha-D-glucose 6-phosphate = beta-D-fructose 6-phosphate. The protein operates within carbohydrate biosynthesis; gluconeogenesis. Its pathway is carbohydrate degradation; glycolysis; D-glyceraldehyde 3-phosphate and glycerone phosphate from D-glucose: step 2/4. Functionally, catalyzes the reversible isomerization of glucose-6-phosphate to fructose-6-phosphate. In Streptococcus pyogenes serotype M28 (strain MGAS6180), this protein is Glucose-6-phosphate isomerase.